A 310-amino-acid chain; its full sequence is Homoserine kinase (310 aa).

91–101 is an ATP binding site; it reads PIGSGLGSSAC.

The protein belongs to the GHMP kinase family. Homoserine kinase subfamily.

It is found in the cytoplasm. The enzyme catalyses L-homoserine + ATP = O-phospho-L-homoserine + ADP + H(+). The protein operates within amino-acid biosynthesis; L-threonine biosynthesis; L-threonine from L-aspartate: step 4/5. Catalyzes the ATP-dependent phosphorylation of L-homoserine to L-homoserine phosphate. This Escherichia coli (strain SE11) protein is Homoserine kinase.